We begin with the raw amino-acid sequence, 203 residues long: High frequency lysogenization protein HflD homolog (203 aa).

The protein belongs to the HflD family.

It is found in the cytoplasm. The protein localises to the cell inner membrane. In Vesicomyosocius okutanii subsp. Calyptogena okutanii (strain HA), this protein is High frequency lysogenization protein HflD homolog.